Here is a 141-residue protein sequence, read N- to C-terminus: Ribonuclease VapC16 (141 aa).

D99 is a binding site for Mg(2+). A disordered region spans residues 99–141; it reads DHAHTAHRRASGSPSTSIRPCAHRPGTAAWPDDHHRRRPVSCL.

It belongs to the PINc/VapC protein family. Mg(2+) is required as a cofactor.

Functionally, toxic component of a type II toxin-antitoxin (TA) system. An RNase. The cognate antitoxin is VapB16. The sequence is that of Ribonuclease VapC16 from Mycobacterium tuberculosis (strain ATCC 25618 / H37Rv).